A 344-amino-acid chain; its full sequence is RNA 3'-terminal phosphate cyclase (344 aa).

ATP contacts are provided by residues Q103 and 283 to 287 (HLADQ). The Tele-AMP-histidine intermediate role is filled by H308.

The protein belongs to the RNA 3'-terminal cyclase family. Type 1 subfamily.

The protein resides in the cytoplasm. The catalysed reaction is a 3'-end 3'-phospho-ribonucleotide-RNA + ATP = a 3'-end 2',3'-cyclophospho-ribonucleotide-RNA + AMP + diphosphate. Catalyzes the conversion of 3'-phosphate to a 2',3'-cyclic phosphodiester at the end of RNA. The mechanism of action of the enzyme occurs in 3 steps: (A) adenylation of the enzyme by ATP; (B) transfer of adenylate to an RNA-N3'P to produce RNA-N3'PP5'A; (C) and attack of the adjacent 2'-hydroxyl on the 3'-phosphorus in the diester linkage to produce the cyclic end product. The biological role of this enzyme is unknown but it is likely to function in some aspects of cellular RNA processing. In Salmonella paratyphi C (strain RKS4594), this protein is RNA 3'-terminal phosphate cyclase.